We begin with the raw amino-acid sequence, 747 residues long: Kinesin-like protein KIF3B (747 aa).

M1 is modified (N-acetylmethionine). N-acetylserine; in Kinesin-like protein KIF3B, N-terminally processed is present on S2. Residues 9-340 (SVRVVVRCRP…LRYANRAKNI (332 aa)) form the Kinesin motor domain. 96-103 (GQTGTGKT) lines the ATP pocket. Residues 346–579 (VNEDPKDALL…EQTQNELTRE (234 aa)) adopt a coiled-coil conformation. Disordered stretches follow at residues 374-412 (IGRRKRREKRREGGGSGGGGEEEEEEGEEGEEDGDDKDD) and 698-747 (IQVD…LVPK). Residues 393–411 (GEEEEEEGEEGEEDGDDKD) show a composition bias toward acidic residues. The tract at residues 580–747 (LKLKHLIIEN…YPQSRGLVPK (168 aa)) is globular. Polar residues predominate over residues 701 to 710 (DASSFESTAS). Positions 711-721 (RKPKARPKSGR) are enriched in basic residues. Over residues 722 to 735 (KSGSSSSSSGNPAS) the composition is skewed to low complexity.

Belongs to the TRAFAC class myosin-kinesin ATPase superfamily. Kinesin family. Kinesin II subfamily. As to quaternary structure, heterodimer of KIF3A and KIF3B. KIF3A/KIF3B heterodimer interacts with KIFAP3 forming a heterotrimeric (KIF3A/KIF3B/KIFAP3) complex. Interacts with the SMC3 subunit of the cohesin complex. Interacts directly with IFT20. Interacts with FLCN.

The protein resides in the cytoplasm. It localises to the cytoskeleton. The protein localises to the cell projection. Its subcellular location is the cilium. It is found in the dendritic spine. Functionally, microtubule-based molecular motor that transport intracellular cargos, such as vesicles, organelles and protein complexes. Uses ATP hydrolysis to generate force to bind and move along the microtubule. Plays a role in cilia formation. Involved in photoreceptor integrity and opsin trafficking in rod photoreceptors. Transports vesicles containing N-methyl-D-aspartate (NMDA) receptor subunit GRIN2A into neuronal dendrites. This is Kinesin-like protein KIF3B from Mus musculus (Mouse).